Reading from the N-terminus, the 136-residue chain is Ribonuclease P protein component (136 aa).

Positions 116-136 (RPQRAAAKGSAGTTQKGTPRA) are disordered. The segment covering 126-136 (AGTTQKGTPRA) has biased composition (polar residues).

Belongs to the RnpA family. As to quaternary structure, consists of a catalytic RNA component (M1 or rnpB) and a protein subunit.

It carries out the reaction Endonucleolytic cleavage of RNA, removing 5'-extranucleotides from tRNA precursor.. RNaseP catalyzes the removal of the 5'-leader sequence from pre-tRNA to produce the mature 5'-terminus. It can also cleave other RNA substrates such as 4.5S RNA. The protein component plays an auxiliary but essential role in vivo by binding to the 5'-leader sequence and broadening the substrate specificity of the ribozyme. This chain is Ribonuclease P protein component, found in Pseudarthrobacter chlorophenolicus (strain ATCC 700700 / DSM 12829 / CIP 107037 / JCM 12360 / KCTC 9906 / NCIMB 13794 / A6) (Arthrobacter chlorophenolicus).